Consider the following 216-residue polypeptide: Ribonuclease HII (216 aa).

Positions 33–216 (WPVAGADEAG…RMSFRPFRQV (184 aa)) constitute an RNase H type-2 domain. A divalent metal cation-binding residues include Asp39, Glu40, and Asp130.

The protein belongs to the RNase HII family. Mn(2+) is required as a cofactor. Requires Mg(2+) as cofactor.

It is found in the cytoplasm. It catalyses the reaction Endonucleolytic cleavage to 5'-phosphomonoester.. In terms of biological role, endonuclease that specifically degrades the RNA of RNA-DNA hybrids. The sequence is that of Ribonuclease HII from Rhizobium meliloti (strain 1021) (Ensifer meliloti).